The primary structure comprises 110 residues: MARGNQRELARQKNMKKTQEISKGKRKEDSLTASQRKQSSGGQKSESKMSAGPHLPLKAPRENPCFPLPAAGGSRYYLAYGSITPISAFVFVVFFSVFFPSFYEDFCCWI.

Positions 1–30 are enriched in basic and acidic residues; it reads MARGNQRELARQKNMKKTQEISKGKRKEDS. The segment at 1 to 61 is disordered; that stretch reads MARGNQRELA…GPHLPLKAPR (61 aa). The segment at 11–17 is required for SNCA binding; the sequence is RQKNMKK. The segment covering 34–50 has biased composition (low complexity); it reads SQRKQSSGGQKSESKMS.

The protein belongs to the SERF family. In terms of assembly, interacts with SNCA; this interaction promotes the aggregation of SNCA. As to expression, isoform Long is predominantly expressed in heart, brain and skeletal muscle. Isoform Short and Isoform Long are expressed throughout the central nervous system, including spinal cord.

Its subcellular location is the cytoplasm. It is found in the cytosol. The protein resides in the nucleus. In terms of biological role, positive regulator of amyloid protein aggregation and proteotoxicity. Induces conformational changes in amyloid proteins, such as APP, HTT, and SNCA, driving them into compact formations preceding the formation of aggregates. The chain is Small EDRK-rich factor 1 (SERF1A) from Homo sapiens (Human).